A 293-amino-acid chain; its full sequence is 4-hydroxy-tetrahydrodipicolinate synthase (293 aa).

Thr-47 is a pyruvate binding site. The Proton donor/acceptor role is filled by Tyr-136. Lys-164 acts as the Schiff-base intermediate with substrate in catalysis. Ile-206 serves as a coordination point for pyruvate.

Belongs to the DapA family. As to quaternary structure, homotetramer; dimer of dimers.

The protein resides in the cytoplasm. The catalysed reaction is L-aspartate 4-semialdehyde + pyruvate = (2S,4S)-4-hydroxy-2,3,4,5-tetrahydrodipicolinate + H2O + H(+). Its pathway is amino-acid biosynthesis; L-lysine biosynthesis via DAP pathway; (S)-tetrahydrodipicolinate from L-aspartate: step 3/4. In terms of biological role, catalyzes the condensation of (S)-aspartate-beta-semialdehyde [(S)-ASA] and pyruvate to 4-hydroxy-tetrahydrodipicolinate (HTPA). The chain is 4-hydroxy-tetrahydrodipicolinate synthase from Listeria monocytogenes serovar 1/2a (strain ATCC BAA-679 / EGD-e).